A 686-amino-acid chain; its full sequence is Homoaconitase, mitochondrial (686 aa).

The transit peptide at 1-17 (MRVVRCVRRFSASRAVS) directs the protein to the mitochondrion. Cys-337, Cys-401, and Cys-404 together coordinate [4Fe-4S] cluster.

The protein belongs to the aconitase/IPM isomerase family. Requires [4Fe-4S] cluster as cofactor.

The protein localises to the mitochondrion. It carries out the reaction (2R,3S)-homoisocitrate = cis-homoaconitate + H2O. It participates in amino-acid biosynthesis; L-lysine biosynthesis via AAA pathway; L-alpha-aminoadipate from 2-oxoglutarate: step 3/5. Its function is as follows. Catalyzes the reversible hydration of cis-homoaconitate to (2R,3S)-homoisocitrate, a step in the alpha-aminoadipate pathway for lysine biosynthesis. The protein is Homoaconitase, mitochondrial (LYS4) of Eremothecium gossypii (strain ATCC 10895 / CBS 109.51 / FGSC 9923 / NRRL Y-1056) (Yeast).